The primary structure comprises 480 residues: Cytochrome P450 724B1 (480 aa).

A helical membrane pass occupies residues 6–26 (LVLAALVILLALLLTLVLSHF). Cys-426 is a binding site for heme.

The protein belongs to the cytochrome P450 family. It depends on heme as a cofactor. In terms of tissue distribution, ubiquitously expressed at low levels, but preferentially in the internodes and the florets before flowering.

The protein resides in the membrane. The enzyme catalyses campesterol + reduced [NADPH--hemoprotein reductase] + O2 = (22S)-22-hydroxycampesterol + oxidized [NADPH--hemoprotein reductase] + H2O + H(+). It participates in plant hormone biosynthesis; brassinosteroid biosynthesis. In terms of biological role, involved in brassinosteroid biosynthesis. May catalyze a C6-oxidation step and may be involved to supply 6-deoxotyphasterol and typhasterol. Involved in internode elongation and seed development. Catalyzes the conversion of campesterol (CR) to (22S)-22-hydroxycampesterol (22-OHCR, 22-hydroxyCR). The protein is Cytochrome P450 724B1 of Oryza sativa subsp. japonica (Rice).